A 341-amino-acid chain; its full sequence is tRNA N6-adenosine threonylcarbamoyltransferase (341 aa).

2 residues coordinate Fe cation: His113 and His117. Residues Ile136 to Gly140, Asp169, Gly182, and Asn280 contribute to the substrate site. Position 308 (Asp308) interacts with Fe cation.

This sequence belongs to the KAE1 / TsaD family. It depends on Fe(2+) as a cofactor.

The protein localises to the cytoplasm. It carries out the reaction L-threonylcarbamoyladenylate + adenosine(37) in tRNA = N(6)-L-threonylcarbamoyladenosine(37) in tRNA + AMP + H(+). Its function is as follows. Required for the formation of a threonylcarbamoyl group on adenosine at position 37 (t(6)A37) in tRNAs that read codons beginning with adenine. Is involved in the transfer of the threonylcarbamoyl moiety of threonylcarbamoyl-AMP (TC-AMP) to the N6 group of A37, together with TsaE and TsaB. TsaD likely plays a direct catalytic role in this reaction. This is tRNA N6-adenosine threonylcarbamoyltransferase from Anaplasma marginale (strain St. Maries).